We begin with the raw amino-acid sequence, 505 residues long: Metalloprotease TIKI1 (505 aa).

Residues 1–19 form the signal peptide; that stretch reads MSPWSWFLLQTLCLLPTGA. Residues 20-477 lie on the Extracellular side of the membrane; the sequence is ASRRGAPGTA…RRGHSHHSQM (458 aa). 4 N-linked (GlcNAc...) asparagine glycosylation sites follow: Asn220, Asn229, Asn278, and Asn336. Residues 389-428 are disordered; that stretch reads PEAVSSGHSTLPPLVSRPGSADTPSEAEQRFRKKRRRSQR. The segment covering 419-428 has biased composition (basic residues); sequence FRKKRRRSQR. Residues 478–498 traverse the membrane as a helical segment; sequence VASSACLSLWTPVFWVLVLAF. Residues 499–505 are Cytoplasmic-facing; that stretch reads QTETPLL.

The protein belongs to the TIKI family. The cofactor is Mn(2+). It depends on Co(2+) as a cofactor.

It is found in the cell membrane. In terms of biological role, metalloprotease that acts as a negative regulator of the Wnt signaling pathway by mediating the cleavage of the 8 N-terminal residues of a subset of Wnt proteins. Following cleavage, Wnt proteins become oxidized and form large disulfide-bond oligomers, leading to their inactivation. Able to cleave WNT3A, WNT5, but not WNT11. Required for head formation. This chain is Metalloprotease TIKI1 (TRABD2A), found in Homo sapiens (Human).